Reading from the N-terminus, the 159-residue chain is U1 small nuclear ribonucleoprotein C (159 aa).

The Matrin-type zinc-finger motif lies at 4-36 (FYCDYCDTYLTHDSPSVRKTHCSGRKHKENVKD). Disordered stretches follow at residues 63–95 (PPTP…MPAP) and 139–159 (MRPP…RPDR). Over residues 77-95 (IPPPPSLGGPPRPGMMPAP) the composition is skewed to pro residues.

The protein belongs to the U1 small nuclear ribonucleoprotein C family. Component of the U1 snRNP. The U1 snRNP is composed of the U1 snRNA and the 7 core Sm proteins snrpb, snrpd1, snrpd2, snrpd3, snrpe, snrpf and snrpg that assemble in a heptameric protein ring on the Sm site of the small nuclear RNA to form the core snRNP, and at least 3 U1 snRNP-specific proteins snrnp70/U1-70K, snrpa/U1-A and snrpc/U1-C. snrpc/U1-C interacts with U1 snRNA and the 5' splice-site region of the pre-mRNA.

Its subcellular location is the nucleus. Its function is as follows. Component of the spliceosomal U1 snRNP, which is essential for recognition of the pre-mRNA 5' splice-site and the subsequent assembly of the spliceosome. SNRPC/U1-C is directly involved in initial 5' splice-site recognition for both constitutive and regulated alternative splicing. The interaction with the 5' splice-site seems to precede base-pairing between the pre-mRNA and the U1 snRNA. Stimulates commitment or early (E) complex formation by stabilizing the base pairing of the 5' end of the U1 snRNA and the 5' splice-site region. The protein is U1 small nuclear ribonucleoprotein C of Xenopus laevis (African clawed frog).